A 357-amino-acid polypeptide reads, in one-letter code: Multiple sugar-binding periplasmic protein SbpA (357 aa).

The N-terminal stretch at methionine 1–alanine 20 is a signal peptide.

It belongs to the bacterial solute-binding protein 2 family.

The protein localises to the periplasm. Its function is as follows. Mediates chemotaxis towards D-galactose, L-arabinose and D-fucose but not towards D-fructose. Probably part of a binding-protein high affinity uptake system. The chain is Multiple sugar-binding periplasmic protein SbpA (sbpA) from Azospirillum brasilense.